The sequence spans 443 residues: Packaging protein 1 (443 aa).

Residues 1-75 form a disordered region; sequence MSGAADGTVP…PEAAQPPPSR (75 aa). A compositionally biased stretch (basic and acidic residues) spans 13–56; it reads EDTHQEDSGERECEQRPVHSGREATGESDPALERPDHGERHGPE. 169–176 serves as a coordination point for ATP; that stretch reads GPTGSGKS. The tract at residues 433–443 is DNA-binding; it reads VSYANKRKWYD.

This sequence belongs to the adenoviridae packaging protein 1 family. As to quaternary structure, homodimer. Part of a genome packaging complex composed of packaging proteins 1, 2 and 3; this complex specifically binds to the packaging sequence on the left end of viral genomic DNA and performs packaging of the viral genome. Interacts with protein 33K.

It localises to the virion. The protein localises to the host nucleus. The protein resides in the host nucleoplasm. It is found in the host nucleolus. Functionally, component of the packaging machinery which encapsidates the viral DNA into preformed capsids and transcriptional activator of the viral major late promoter (MLP). Binds, along with packaging proteins 2 and 3, to the specific packaging sequence on the left end of viral genomic DNA and displays ATPase activity thereby providing the power stroke of the packaging machinery. The activity of packaging protein IVa2 is stimulated by protein 33K which acts as a terminase. May be the protein that pumps DNA into the capsid powered by ATP hydrolysis. Specifically binds to the 5'-CG-3' nucleotides of the repeats making up the packaging sequence. Component of the DEF-A and DEF-B transcription factors that bind downstream elements of the major late promoter (MLP), and stimulate transcription from the MLP after initiation of viral DNA replication. DEF-A is a heterodimer packaging proteins 1 and 2 and DEF-B is a homodimer of packaging protein 1. In Pantherophis guttatus (Corn snake), this protein is Packaging protein 1.